Here is a 451-residue protein sequence, read N- to C-terminus: uncharacterized protein (451 aa).

The TRAM domain maps to 1–59; that stretch reads MLKKNDIVEVEISDLSHDGAGIAKVDGLVFFVDNALPTEKIRMRVLKVKKNIAFGKVES. Gln-283, Tyr-312, Glu-333, and Asp-381 together coordinate S-adenosyl-L-methionine. The Nucleophile role is filled by Cys-408.

The protein belongs to the class I-like SAM-binding methyltransferase superfamily. RNA M5U methyltransferase family.

This is an uncharacterized protein from Streptococcus mutans serotype c (strain ATCC 700610 / UA159).